We begin with the raw amino-acid sequence, 239 residues long: tRNA pseudouridine synthase C (239 aa).

The active site involves D54.

It belongs to the pseudouridine synthase RluA family.

It catalyses the reaction uridine(65) in tRNA = pseudouridine(65) in tRNA. In terms of biological role, responsible for synthesis of pseudouridine from uracil-65 in transfer RNAs. This chain is tRNA pseudouridine synthase C (truC), found in Haemophilus influenzae (strain ATCC 51907 / DSM 11121 / KW20 / Rd).